A 264-amino-acid chain; its full sequence is Thymidylate synthase (264 aa).

Arginine 21 contributes to the dUMP binding site. Histidine 51 contributes to the (6R)-5,10-methylene-5,6,7,8-tetrahydrofolate binding site. A dUMP-binding site is contributed by 126–127; the sequence is RR. Cysteine 146 functions as the Nucleophile in the catalytic mechanism. Residues 166 to 169, asparagine 177, and 207 to 209 each bind dUMP; these read RSAD and HLY. (6R)-5,10-methylene-5,6,7,8-tetrahydrofolate is bound at residue aspartate 169. Serine 263 lines the (6R)-5,10-methylene-5,6,7,8-tetrahydrofolate pocket.

The protein belongs to the thymidylate synthase family. Bacterial-type ThyA subfamily. Homodimer.

Its subcellular location is the cytoplasm. The enzyme catalyses dUMP + (6R)-5,10-methylene-5,6,7,8-tetrahydrofolate = 7,8-dihydrofolate + dTMP. It functions in the pathway pyrimidine metabolism; dTTP biosynthesis. Its function is as follows. Catalyzes the reductive methylation of 2'-deoxyuridine-5'-monophosphate (dUMP) to 2'-deoxythymidine-5'-monophosphate (dTMP) while utilizing 5,10-methylenetetrahydrofolate (mTHF) as the methyl donor and reductant in the reaction, yielding dihydrofolate (DHF) as a by-product. This enzymatic reaction provides an intracellular de novo source of dTMP, an essential precursor for DNA biosynthesis. This is Thymidylate synthase from Shouchella clausii (strain KSM-K16) (Alkalihalobacillus clausii).